The sequence spans 466 residues: MIKPRTPPGVLELLPREQIAFQRMLDVIRRNYERFGFLPVETPVFELSDVLLTKSGGETERQVYFVQSTGTLANAAESGATRLPELALRFDLTVPLARYVAEYEHVLAFPFRRYQMQRVYRGERAQRGRFREFYQCDIDVIGKQTLSIRYDAEVLAVIHAVFSELGIGDFQVQLNNRKVLRGFLESQGVRDGDLQLAVLREVDKLDKRGVLDVRDTLIGQGFGIPAAQVENILTFVATRSTSHADALVRLDALIEDSGPEAHEMLRQGVAELREVLTLVNVLGVPEHAYRLNFSIARGLDYYTGTVYETSLINHPQIGSICSGGRYENLANHYTQSKLPGVGISIGLTRLFWQLRDAGVMDGIAESSVQAMVVLMDEATLDDALDIARCLRIGGINTEVQMEAKKVSKQFQYASRAGIRFVVLAGDDERARGVVAVKDLTREQQFEIPREELASTLQVELEQAKVM.

This sequence belongs to the class-II aminoacyl-tRNA synthetase family. Homodimer.

The protein resides in the cytoplasm. It catalyses the reaction tRNA(His) + L-histidine + ATP = L-histidyl-tRNA(His) + AMP + diphosphate + H(+). The protein is Histidine--tRNA ligase (hisS) of Xylella fastidiosa (strain 9a5c).